A 323-amino-acid polypeptide reads, in one-letter code: MQREPPKRKQEKKVEKGLFDATSFGKDLLAGGVAAAVSKTTVAPIERVKLLLQVQASSKQISPEAQYKGIVDCLVRIPREQGFLSYWRGNLANVIRYFPTQALNFAFKDKYKQLFMSGVNKEKQFWRWFLANLASGGAAGATSLCVVYPLDFARTRLGADIGKGPEERQFKGLGDCIMKIAKSDGIVGLYQGFGVSVQGIIVYRASYFGAYDTVKGLLPKPKETHFLVSFFIAQVVTTCSGILSYPFDTVRRRMMMQSGEAERQYKGTLDCFMKIYQQEGIGAFFRGAFSNILRGTGGALVLVLYDKIKDLLNIDIGGSSSGD.

The Mitochondrial intermembrane segment spans residues 1-23; the sequence is MQREPPKRKQEKKVEKGLFDATS. Residues 22-114 form a Solcar 1 repeat; the sequence is TSFGKDLLAG…FAFKDKYKQL (93 aa). A helical transmembrane segment spans residues 24–53; that stretch reads FGKDLLAGGVAAAVSKTTVAPIERVKLLLQ. Residues 54-90 are Mitochondrial matrix-facing; that stretch reads VQASSKQISPEAQYKGIVDCLVRIPREQGFLSYWRGN. The helical transmembrane segment at 91–115 threads the bilayer; that stretch reads LANVIRYFPTQALNFAFKDKYKQLF. Residues R96 and K108 each contribute to the ADP site. The Mitochondrial intermembrane segment spans residues 116 to 125; sequence MSGVNKEKQF. A helical membrane pass occupies residues 126-146; sequence WRWFLANLASGGAAGATSLCV. Solcar repeat units follow at residues 127–217 and 224–311; these read RWFL…VKGL and THFL…IKDL. Residues 147 to 194 are Mitochondrial matrix-facing; sequence VYPLDFARTRLGADIGKGPEERQFKGLGDCIMKIAKSDGIVGLYQGFG. A helical membrane pass occupies residues 195 to 215; the sequence is VSVQGIIVYRASYFGAYDTVK. Residues 216–226 are Mitochondrial intermembrane-facing; it reads GLLPKPKETHF. The chain crosses the membrane as a helical span at residues 227 to 247; that stretch reads LVSFFIAQVVTTCSGILSYPF. Over 248 to 287 the chain is Mitochondrial matrix; that stretch reads DTVRRRMMMQSGEAERQYKGTLDCFMKIYQQEGIGAFFRG. Residue R251 participates in ADP binding. The tract at residues 251 to 256 is important for transport activity; it reads RRRMMM. The short motif at 251 to 256 is the Nucleotide carrier signature motif element; that stretch reads RRRMMM. The helical transmembrane segment at 288–305 threads the bilayer; it reads AFSNILRGTGGALVLVLY. Residues 306-323 lie on the Mitochondrial intermembrane side of the membrane; it reads DKIKDLLNIDIGGSSSGD.

This sequence belongs to the mitochondrial carrier (TC 2.A.29) family. In terms of assembly, monomer.

It is found in the mitochondrion inner membrane. The protein localises to the membrane. The protein resides in the cell projection. Its subcellular location is the cilium. It localises to the flagellum membrane. It carries out the reaction ADP(in) + ATP(out) = ADP(out) + ATP(in). It catalyses the reaction dATP(out) + ADP(in) = dATP(in) + ADP(out). The catalysed reaction is dADP(in) + ADP(out) = dADP(out) + ADP(in). The enzyme catalyses H(+)(in) = H(+)(out). With respect to regulation, the matrix-open state (m-state) is inhibited by the membrane-permeable bongkrekic acid (BKA). The cytoplasmic-open state (c-state) is inhibited by the membrane-impermeable toxic inhibitor carboxyatractyloside (CATR). Proton transporter activity is inhibited by ADP:ATP antiporter activity. Functionally, ADP:ATP antiporter that mediates import of ADP into the mitochondrial matrix for ATP synthesis, and export of ATP out to fuel the cell. Cycles between the cytoplasmic-open state (c-state) and the matrix-open state (m-state): operates by the alternating access mechanism with a single substrate-binding site intermittently exposed to either the cytosolic (c-state) or matrix (m-state) side of the inner mitochondrial membrane. Specifically required during spermatogenesis, probably to mediate ADP:ATP exchange in spermatocytes. Large ATP supplies from mitochondria may be critical for normal progression of spermatogenesis during early stages of meiotic prophase I, including DNA double-strand break repair and chromosomal synapsis. In addition to its ADP:ATP antiporter activity, also involved in mitochondrial uncoupling and mitochondrial permeability transition pore (mPTP) activity. Plays a role in mitochondrial uncoupling by acting as a proton transporter: proton transport uncouples the proton flows via the electron transport chain and ATP synthase to reduce the efficiency of ATP production and cause mitochondrial thermogenesis. Proton transporter activity is inhibited by ADP:ATP antiporter activity, suggesting that SLC25A31/ANT4 acts as a master regulator of mitochondrial energy output by maintaining a delicate balance between ATP production (ADP:ATP antiporter activity) and thermogenesis (proton transporter activity). Proton transporter activity requires free fatty acids as cofactor, but does not transport it. Among nucleotides, may also exchange ADP for dATP and dADP. Also plays a key role in mPTP opening, a non-specific pore that enables free passage of the mitochondrial membranes to solutes of up to 1.5 kDa, and which contributes to cell death. It is however unclear if SLC25A31/ANT4 constitutes a pore-forming component of mPTP or regulates it. This Bos taurus (Bovine) protein is ADP/ATP translocase 4.